The chain runs to 328 residues: Malate dehydrogenase (328 aa).

Position 11 to 17 (11 to 17 (GAAGQIG)) interacts with NAD(+). The substrate site is built by arginine 94 and arginine 100. NAD(+)-binding positions include asparagine 107, glutamine 114, and 131–133 (VGN). Residues asparagine 133 and arginine 164 each contribute to the substrate site. The Proton acceptor role is filled by histidine 189.

The protein belongs to the LDH/MDH superfamily. MDH type 2 family.

It catalyses the reaction (S)-malate + NAD(+) = oxaloacetate + NADH + H(+). Catalyzes the reversible oxidation of malate to oxaloacetate. This is Malate dehydrogenase from Xanthomonas oryzae pv. oryzae (strain PXO99A).